Here is a 190-residue protein sequence, read N- to C-terminus: RNA pyrophosphohydrolase (190 aa).

One can recognise a Nudix hydrolase domain in the interval 6-149 (GYRPNVGIVL…KRGVYARALC (144 aa)). The Nudix box signature appears at 38–59 (GGMHSDETPVEAMYRELNEEIG).

Belongs to the Nudix hydrolase family. RppH subfamily. A divalent metal cation is required as a cofactor.

Its function is as follows. Accelerates the degradation of transcripts by removing pyrophosphate from the 5'-end of triphosphorylated RNA, leading to a more labile monophosphorylated state that can stimulate subsequent ribonuclease cleavage. In Xylella fastidiosa (strain M12), this protein is RNA pyrophosphohydrolase.